A 452-amino-acid polypeptide reads, in one-letter code: uncharacterized protein (452 aa).

ATP is bound at residue 72–79 (GPPGSGKT).

This sequence belongs to the AAA ATPase family. RarA/MGS1/WRNIP1 subfamily.

This is an uncharacterized protein from Mycobacterium tuberculosis (strain ATCC 25618 / H37Rv).